The following is a 304-amino-acid chain: E3 ubiquitin-protein ligase CHIP (304 aa).

Positions 1-10 (MKGKEEKEGG) are enriched in basic and acidic residues. The interval 1-30 (MKGKEEKEGGARLGTGGGGSPDKSPSAQEL) is disordered. Lys-2 is covalently cross-linked (Glycyl lysine isopeptide (Lys-Gly) (interchain with G-Cter in ubiquitin)). Positions 11–20 (ARLGTGGGGS) are enriched in gly residues. Ser-20 bears the Phosphoserine mark. Lys-23 participates in a covalent cross-link: Glycyl lysine isopeptide (Lys-Gly) (interchain with G-Cter in ubiquitin). A phosphoserine mark is found at Ser-24 and Ser-26. 3 TPR repeats span residues 27 to 60 (AQEL…NPLV), 61 to 94 (AVYY…DGQS), and 96 to 128 (KAHF…AKEQ). The interval 102–201 (GQCQLEMESY…GHIRAQQACI (100 aa)) is required for interaction with MAPK7. The required for interaction with and ubiquitination of MYOCD stretch occupies residues 143-197 (AKKKRWNSIEERRIHQESELHSYLTRLIAAERERELEECQRNHEGHEDDGHIRAQ). The tract at residues 144 to 198 (KKKRWNSIEERRIHQESELHSYLTRLIAAERERELEECQRNHEGHEDDGHIRAQQ) is required for interaction with FOXO1. Residues 144-304 (KKKRWNSIEE…ISENGWVEDY (161 aa)) form a required for ubiquitination of FOXO1 region. Ser-150 is subject to Phosphoserine. Residues Lys-222 and Lys-256 each participate in a glycyl lysine isopeptide (Lys-Gly) (interchain with G-Cter in ubiquitin) cross-link. The region spanning 227–301 (DIPDYLCGKI…DAFISENGWV (75 aa)) is the U-box domain. A Phosphoserine modification is found at Ser-274.

Homodimer. Interacts with BAG2, and with the E2 ubiquitin conjugating enzymes UBE2D1, UBE2D2 and UBE2D3. Detected in a ternary complex containing STUB1, HSPA1A and HSPBP1. Part of a complex composed of STUB1/CHIP, VCP/p97, CHRNA3, and UBXN2A that modulates the ubiquitination and endoplasmic reticulum-associated degradation (ERAD) of CHRNA3. Within the complex UBXN2A acts as a scaffold protein required for the interaction of CHRNA3 with VCP/p97, this interaction also inhibits CHRNA3 ubiquitination by STUB1/CHIP and subsequently ERAD. Interacts with MKKS. Interacts with DNAAF4. Interacts (via the U-box domain) with the UBE2V2-UBE2N heterodimer; the complex has a specific 'Lys-63'-linked polyubiquitination activity. Interacts (when monoubiquitinated) with ATXN3. Interacts with UBE2W. Interacts with DNAJB6. Interacts with FLCN and HSP90AA1. Interacts with HSP90. Interacts with UBE2N and UBE2V1. Interacts (via TPR repeats) with HSPA8 (via C-terminus). Interacts (via TPR repeats) with HSPA1A (via C-terminus). Interacts with the non-acetylated form of HSPA1A and HSPA1B. Interacts with SMAD3 and HSP90AB1. Interacts with UBE4B. Interacts with PRMT5. Interacts with MYOCD (via C-terminus). Interacts with FOXO1 (when phosphorylated on 'Ser-253'). Interacts with MAPK7/ERK5; the interaction is enhanced in the presence of IGF1 or MAP2K5 and promotes STUB1/CHIP E3 ligase activity. Interacts with and ubiquitinates ESR1; the interaction is promoted in the absence of estradiol (17-beta-estradiol/E2). Interacts with ESR2. Interacts with and ubiquitinates NFATC3; HSPA1A/HSP70 is required as a co-chaperone. In macrophages, interacts with PAQR3; the interaction promotes PPARG poylubiquitination and STUB1-mediated degradation. Component of the chaperone-assisted selective autophagy (CASA) complex consisting of BAG3, HSPA8/HSC70, HSPB8 and STUB1/CHIP. In terms of processing, auto-ubiquitinated; mediated by UBE2D1 and UBE2D2 and enhanced in the presence of MAP2K5. Monoubiquitinated at Lys-2 following cell stress by UBE2W, promoting the interaction with ATXN3. As to expression, expressed in the brain.

Its subcellular location is the cytoplasm. The protein resides in the nucleus. The protein localises to the mitochondrion. It carries out the reaction S-ubiquitinyl-[E2 ubiquitin-conjugating enzyme]-L-cysteine + [acceptor protein]-L-lysine = [E2 ubiquitin-conjugating enzyme]-L-cysteine + N(6)-ubiquitinyl-[acceptor protein]-L-lysine.. It participates in protein modification; protein ubiquitination. Functionally, E3 ubiquitin-protein ligase which targets misfolded chaperone substrates towards proteasomal degradation. Plays a role in the maintenance of mitochondrial morphology and promotes mitophagic removal of dysfunctional mitochondria; thereby acts as a protector against apoptosis in response to cellular stress. Negatively regulates vascular smooth muscle contraction, via degradation of the transcriptional activator MYOCD and subsequent loss of transcription of genes involved in vascular smooth muscle contraction. Promotes survival and proliferation of cardiac smooth muscle cells via ubiquitination and degradation of FOXO1, resulting in subsequent repression of FOXO1-mediated transcription of pro-apoptotic genes. Ubiquitinates ICER-type isoforms of CREM and targets them for proteasomal degradation, thereby acts as a positive effector of MAPK/ERK-mediated inhibition of apoptosis in cardiomyocytes. Inhibits lipopolysaccharide-induced apoptosis and hypertrophy in cardiomyocytes, via ubiquitination and subsequent proteasomal degradation of NFATC3. Collaborates with ATXN3 in the degradation of misfolded chaperone substrates: ATXN3 restricting the length of ubiquitin chain attached to STUB1/CHIP substrates and preventing further chain extension. Ubiquitinates NOS1 in concert with Hsp70 and Hsp40. Modulates the activity of several chaperone complexes, including Hsp70, Hsc70 and Hsp90. Ubiquitinates CHRNA3 targeting it for endoplasmic reticulum-associated degradation in cortical neurons, as part of the STUB1-VCP-UBXN2A complex. Ubiquitinates and promotes ESR1 proteasomal degradation in response to age-related circulating estradiol (17-beta-estradiol/E2) decline, thereby promotes neuronal apoptosis in response to ischemic reperfusion injury. Mediates transfer of non-canonical short ubiquitin chains to HSPA8 that have no effect on HSPA8 degradation. Mediates polyubiquitination of DNA polymerase beta (POLB) at 'Lys-41', 'Lys-61' and 'Lys-81', thereby playing a role in base-excision repair: catalyzes polyubiquitination by amplifying the HUWE1/ARF-BP1-dependent monoubiquitination and leading to POLB-degradation by the proteasome. Mediates polyubiquitination of CYP3A4. Ubiquitinates EPHA2 and may regulate the receptor stability and activity through proteasomal degradation. Acts as a co-chaperone for HSPA1A and HSPA1B chaperone proteins and promotes ubiquitin-mediated protein degradation. Negatively regulates the suppressive function of regulatory T-cells (Treg) during inflammation by mediating the ubiquitination and degradation of FOXP3 in a HSPA1A/B-dependent manner. Catalyzes monoubiquitination of SIRT6, preventing its degradation by the proteasome. Likely mediates polyubiquitination and down-regulates plasma membrane expression of PD-L1/CD274, an immune inhibitory ligand critical for immune tolerance to self and antitumor immunity. Negatively regulates TGF-beta signaling by modulating the basal level of SMAD3 via ubiquitin-mediated degradation. Plays a role in the degradation of TP53. Mediates ubiquitination of RIPK3 leading to its subsequent proteasome-dependent degradation. May regulate myosin assembly in striated muscles together with UBE4B and VCP/p97 by targeting myosin chaperone UNC45B for proteasomal degradation. Ubiquitinates PPARG in macrophages playing a role in M2 macrophages polarization and angiogenesis. This is E3 ubiquitin-protein ligase CHIP from Mus musculus (Mouse).